The primary structure comprises 530 residues: Ubiquitin carboxyl-terminal hydrolase 17-like protein 13 (530 aa).

The 296-residue stretch at 80–375 (AGLQNMGNTC…QAYVLFYIQK (296 aa)) folds into the USP domain. The Nucleophile role is filled by Cys-89. The Proton acceptor role is filled by His-334. Composition is skewed to basic and acidic residues over residues 382–392 (SESVSRGREPR) and 398–412 (DTDR…KRDH). 2 disordered regions span residues 382 to 412 (SESV…KRDH) and 477 to 530 (NHHP…LVCQ). Residues 493 to 505 (TPTHQESMNTGTL) are compositionally biased toward polar residues. The span at 510–524 (GRARRSKGKNKHSKR) shows a compositional bias: basic residues.

This sequence belongs to the peptidase C19 family. USP17 subfamily.

It localises to the nucleus. The protein localises to the endoplasmic reticulum. It carries out the reaction Thiol-dependent hydrolysis of ester, thioester, amide, peptide and isopeptide bonds formed by the C-terminal Gly of ubiquitin (a 76-residue protein attached to proteins as an intracellular targeting signal).. Its function is as follows. Deubiquitinating enzyme that removes conjugated ubiquitin from specific proteins to regulate different cellular processes that may include cell proliferation, progression through the cell cycle, apoptosis, cell migration, and the cellular response to viral infection. This Homo sapiens (Human) protein is Ubiquitin carboxyl-terminal hydrolase 17-like protein 13 (USP17L13).